A 412-amino-acid polypeptide reads, in one-letter code: Multifunctional CCA protein (412 aa).

Residues Gly-8 and Arg-11 each coordinate ATP. Residues Gly-8 and Arg-11 each contribute to the CTP site. Mg(2+)-binding residues include Asp-21 and Asp-23. ATP is bound by residues Arg-91, Arg-137, and Arg-140. CTP-binding residues include Arg-91, Arg-137, and Arg-140. In terms of domain architecture, HD spans 228-329 (TGIHTLMTLS…VKLFDSIDAW (102 aa)).

Belongs to the tRNA nucleotidyltransferase/poly(A) polymerase family. Bacterial CCA-adding enzyme type 1 subfamily. As to quaternary structure, monomer. Can also form homodimers and oligomers. Mg(2+) serves as cofactor. The cofactor is Ni(2+).

It carries out the reaction a tRNA precursor + 2 CTP + ATP = a tRNA with a 3' CCA end + 3 diphosphate. It catalyses the reaction a tRNA with a 3' CCA end + 2 CTP + ATP = a tRNA with a 3' CCACCA end + 3 diphosphate. Its function is as follows. Catalyzes the addition and repair of the essential 3'-terminal CCA sequence in tRNAs without using a nucleic acid template. Adds these three nucleotides in the order of C, C, and A to the tRNA nucleotide-73, using CTP and ATP as substrates and producing inorganic pyrophosphate. tRNA 3'-terminal CCA addition is required both for tRNA processing and repair. Also involved in tRNA surveillance by mediating tandem CCA addition to generate a CCACCA at the 3' terminus of unstable tRNAs. While stable tRNAs receive only 3'-terminal CCA, unstable tRNAs are marked with CCACCA and rapidly degraded. The polypeptide is Multifunctional CCA protein (Escherichia coli O6:H1 (strain CFT073 / ATCC 700928 / UPEC)).